The following is a 430-amino-acid chain: Enolase (430 aa).

(2R)-2-phosphoglycerate is bound at residue Q166. Residue E208 is the Proton donor of the active site. Mg(2+)-binding residues include D245, E288, and D315. (2R)-2-phosphoglycerate-binding residues include K340, R369, S370, and K391. The active-site Proton acceptor is K340.

Belongs to the enolase family. Mg(2+) is required as a cofactor.

It localises to the cytoplasm. It is found in the secreted. Its subcellular location is the cell surface. The enzyme catalyses (2R)-2-phosphoglycerate = phosphoenolpyruvate + H2O. Its pathway is carbohydrate degradation; glycolysis; pyruvate from D-glyceraldehyde 3-phosphate: step 4/5. Its function is as follows. Catalyzes the reversible conversion of 2-phosphoglycerate (2-PG) into phosphoenolpyruvate (PEP). It is essential for the degradation of carbohydrates via glycolysis. This is Enolase from Clostridium beijerinckii (strain ATCC 51743 / NCIMB 8052) (Clostridium acetobutylicum).